We begin with the raw amino-acid sequence, 307 residues long: Homoserine kinase (307 aa).

91–101 contacts ATP; it reads PLARGLGSSAA.

The protein belongs to the GHMP kinase family. Homoserine kinase subfamily.

It localises to the cytoplasm. The enzyme catalyses L-homoserine + ATP = O-phospho-L-homoserine + ADP + H(+). The protein operates within amino-acid biosynthesis; L-threonine biosynthesis; L-threonine from L-aspartate: step 4/5. Functionally, catalyzes the ATP-dependent phosphorylation of L-homoserine to L-homoserine phosphate. The chain is Homoserine kinase from Deinococcus radiodurans (strain ATCC 13939 / DSM 20539 / JCM 16871 / CCUG 27074 / LMG 4051 / NBRC 15346 / NCIMB 9279 / VKM B-1422 / R1).